The sequence spans 706 residues: MSSAGVLTCIPDSGPIFRETSLRPPVPGQETNNFKPEKFTMDSQHLKHKEDFNREAEGCVAHDSRFSRWGRSLNLLLDDQDGATLFRMYLEGEGLGDLLTFWFACNGFRAMDPLEPKTSKTAKAIYRWYVQNSSAVSGRLKPTTRTQVKECVKNHQLNKTVFDQAQQEIQRAMEQEAFTSFLQSDICKEYARGVEDSPTPESPGPGLPTLTEDEEFGGLHHFSSGMGKINRAFSRIPPRNQRSHFRKLEQTYQYFAPAASINDSEISSDALTEDSMSMTDGSVDGIPPYRSKKQREIHRSVSANGKVSLPFVPRTMRPPAEMMPTSPAEFAAKLTIALEKVKKQRDAEEKLEEKLQRLKEEEEIADYDIPSSSHETVPGAALEDDPQSILDDHVSRVLKTPANLSPRSQSPFVQRKGKFQPAFSKGQTSTSCHLRPKVPQGMEATSTLASELRSSVSSQLPRSSRKPEGCTQPHRPEEGTSAAVLTTPLSPEQEAERNHSVLQWVLDSAKLMKKHHRETASVTPCPELKKATHRAASQPAHLFLQDTSMPPLTAPNTLDQLEEARRRLVEDKRVPKLHKSRCVQSTTLKEKGKTAESVPSSGFSTLKLSEEQKTAKKPSSECPGQGLAIVYYFCGERIPYMIRTKEPSLTLQEFKELLSKKGSNKYYFKKESHEFECNAVFQEVSEEDAVLPLFEEKIICKVERAC.

In terms of domain architecture, RGS spans 72 to 191; sequence SLNLLLDDQD…LQSDICKEYA (120 aa). 3 disordered regions span residues 278-298, 400-482, and 585-605; these read MTDGSVDGIPPYRSKKQREIH, TPAN…GTSA, and STTLKEKGKTAESVPSSGFST. Polar residues predominate over residues 402 to 412; that stretch reads ANLSPRSQSPF. Low complexity predominate over residues 453–462; the sequence is RSSVSSQLPR. The region spanning 624–706 is the DIX domain; sequence GQGLAIVYYF…KIICKVERAC (83 aa).

In terms of assembly, interacts with dvl2/dsh via DIX domains in both proteins. Forms a complex with ctnnb1/beta-catenin and gsk3b. Also forms heterodimers with mouse Axin1.

It is found in the cytoplasm. It localises to the cytoplasmic vesicle. Its function is as follows. Regulates the wnt signaling pathway by interacting with dvl2/dsh, which displaces gsk3b from the axnr-gsk3b complex and thus prevents degradation of ctnnb1/beta-catenin. The sequence is that of Axin-related protein from Xenopus laevis (African clawed frog).